The sequence spans 141 residues: HTH-type transcriptional repressor NsrR (141 aa).

The HTH rrf2-type domain maps to 2-129; the sequence is QLTSFTDYAL…DECTIESLLS (128 aa). The H-T-H motif DNA-binding region spans 28-51; that stretch reads ITEVTDLFGVSRNHMVKVINRLGQ. [2Fe-2S] cluster-binding residues include cysteine 91, cysteine 96, and cysteine 102.

It depends on [2Fe-2S] cluster as a cofactor.

Nitric oxide-sensitive repressor of genes involved in protecting the cell against nitrosative stress. May require iron for activity. This chain is HTH-type transcriptional repressor NsrR, found in Vibrio parahaemolyticus serotype O3:K6 (strain RIMD 2210633).